The following is a 155-amino-acid chain: Small ribosomal subunit protein uS7cz/uS7cy (155 aa).

It belongs to the universal ribosomal protein uS7 family. In terms of assembly, part of the 30S ribosomal subunit.

The protein localises to the plastid. Its subcellular location is the chloroplast. Its function is as follows. One of the primary rRNA binding proteins, it binds directly to 16S rRNA where it nucleates assembly of the head domain of the 30S subunit. The polypeptide is Small ribosomal subunit protein uS7cz/uS7cy (rps7-A) (Guizotia abyssinica (Niger)).